Reading from the N-terminus, the 1246-residue chain is Probable membrane antigen 3 (1246 aa).

It is found in the virion tegument. This is Probable membrane antigen 3 (3) from Saimiri sciureus (Common squirrel monkey).